Here is a 225-residue protein sequence, read N- to C-terminus: Protein GrpE (225 aa).

The segment covering 1–15 (MSGDASTPEQDQNVV) has biased composition (polar residues). Disordered regions lie at residues 1-48 (MSGD…DRMQ) and 198-225 (VSMG…AEEA). The span at 201-225 (GPGPSDPGSAPAEAAAAPDQTAEEA) shows a compositional bias: low complexity.

The protein belongs to the GrpE family. In terms of assembly, homodimer.

It localises to the cytoplasm. Participates actively in the response to hyperosmotic and heat shock by preventing the aggregation of stress-denatured proteins, in association with DnaK and GrpE. It is the nucleotide exchange factor for DnaK and may function as a thermosensor. Unfolded proteins bind initially to DnaJ; upon interaction with the DnaJ-bound protein, DnaK hydrolyzes its bound ATP, resulting in the formation of a stable complex. GrpE releases ADP from DnaK; ATP binding to DnaK triggers the release of the substrate protein, thus completing the reaction cycle. Several rounds of ATP-dependent interactions between DnaJ, DnaK and GrpE are required for fully efficient folding. This is Protein GrpE from Synechococcus sp. (strain CC9605).